A 288-amino-acid polypeptide reads, in one-letter code: 2-hydroxy-6-oxononadienedioate/2-hydroxy-6-oxononatrienedioate hydrolase (288 aa).

The region spanning 38-274 is the AB hydrolase-1 domain; that stretch reads ALVLLHGSGP…RCGHWAQWEH (237 aa). The active-site Proton acceptor is histidine 268.

Belongs to the AB hydrolase superfamily. MhpC family. As to quaternary structure, homodimer.

The enzyme catalyses (2Z,4E)-2-hydroxy-6-oxonona-2,4-dienedioate + H2O = (2Z)-2-hydroxypenta-2,4-dienoate + succinate + H(+). The catalysed reaction is (2Z,4E,7E)-2-hydroxy-6-oxonona-2,4,7-trienedioate + H2O = (2Z)-2-hydroxypenta-2,4-dienoate + fumarate + H(+). The protein operates within aromatic compound metabolism; 3-phenylpropanoate degradation. Functionally, catalyzes the cleavage of the C5-C6 bond of 2-hydroxy-6-oxononadienedioate and 2-hydroxy-6-oxononatrienedioate, a dienol ring fission product of the bacterial meta-cleavage pathway for degradation of phenylpropionic acid. The sequence is that of 2-hydroxy-6-oxononadienedioate/2-hydroxy-6-oxononatrienedioate hydrolase from Burkholderia vietnamiensis (strain G4 / LMG 22486) (Burkholderia cepacia (strain R1808)).